The sequence spans 766 residues: MWRLRTGSSTVDKADSWLSSLNNHLGRQIWCYDPEAGTPQEREAVEAECARFTANRHQQRQSADTLLRLQFQKEHSANRLPSRITVNEDHEVTEDDVTTTLCRALQFYSQLQTDDGHWSGDHSGPMFFLPGMVIALYVTGALDSVLSEHHQREICRYIYNHQRQDGSWGLHPEGTGTLFGTVLSYVTLRLMGESKSNSNNREALRKAQTWIIDHGGATDVPSWGKFWLAVLGVYEWSGVNPLPPESWLLPKSLIAHPGRLPVLYRFIFLPMSYIYARRLSHHLTKIIEDLRKELYTIPYEDIDWNHARKLGAKEEIVPRSVVQDVILSILHNYVEPIMSHWPGFLLRQKALALIMEHIHHEDETTQYLCVCPVSKALNMLCCWLEDRNSDAFKKHLSRVLDFLWLSEDGMKMQVCNGSQLWDTALSVRALISANLLNECSSMLRRAKLYIENTQIQESYPGDLDHWHRITSKGGWPQSTRDWGWPVSDCTAEALQAVLALSSQSTTDVGEALPEERIHECINVLLSFQKSNGSFAPFDARNPLEGPKIWNHTESPGYKSLDFECVECTSSVIQALAAFNKIYPEHRAKEISISIQEGTRFIERLQNSDGSWSGTWGICFTYATWFGIMGLLASGARYYESIAIQRACEFILSKQLPNGGWGEHFHSFKNKVYTNLEGERAHVVHTSWSMLALLATGQEGRDAIPLHRAAKILINAQMETGDYSQEGVVGAVCGDHTISYATYRCVFPIWALGEYRYKLFGKKNMYI.

7 PFTB repeats span residues 101–143 (LCRA…GALD), 151–192 (QREI…RLMG), 456–507 (QESY…STTD), 517–558 (IHEC…PGYK), 594–634 (IQEG…LASG), 643–684 (IQRA…HVVH), and 705–752 (LHRA…WALG). Residue Asp-488 is the Proton donor of the active site.

The protein belongs to the terpene cyclase/mutase family.

The catalysed reaction is pre-alpha-onocerin = alpha-onocerin. It functions in the pathway secondary metabolite biosynthesis; terpenoid biosynthesis. Its function is as follows. Oxidosqualene cyclase involved in the biosynthesis of alpha-onocerin, a triterpenoid characterized by a symmetrical structure due to cyclizations at both termini of dioxidosqualene that inhibits acetylcholinesterase. Catalyzes the second half of the cyclization, exclusively from pre-alpha-onocerin. The polypeptide is Alpha-onocerin synthase LCD (Lycopodium clavatum (Stag's-horn clubmoss)).